Reading from the N-terminus, the 1175-residue chain is 1-phosphatidylinositol 4,5-bisphosphate phosphodiesterase beta-4 (1175 aa).

A2 carries the post-translational modification N-acetylalanine. Positions Q313–K463 constitute a PI-PLC X-box domain. Active-site residues include H328 and H375. Residues A487 to P512 form a disordered region. Over residues L493–E508 the composition is skewed to acidic residues. The 117-residue stretch at L565 to R681 folds into the PI-PLC Y-box domain. Residues D684–L809 enclose the C2 domain. Disordered regions lie at residues S860–G904 and K1082–L1110. Polar residues-rich tracts occupy residues V885 to A900 and M1085 to D1094. T886 carries the phosphothreonine modification. Basic and acidic residues predominate over residues K1095 to E1109.

Ca(2+) is required as a cofactor. As to expression, preferentially expressed in the retina.

It is found in the cell membrane. It catalyses the reaction a 1,2-diacyl-sn-glycero-3-phospho-(1D-myo-inositol-4,5-bisphosphate) + H2O = 1D-myo-inositol 1,4,5-trisphosphate + a 1,2-diacyl-sn-glycerol + H(+). It carries out the reaction a 1,2-diacyl-sn-glycero-3-phospho-(1D-myo-inositol) + H2O = 1D-myo-inositol 1-phosphate + a 1,2-diacyl-sn-glycerol + H(+). Activated phosphatidylinositol-specific phospholipase C enzymes catalyze the production of the second messenger molecules diacylglycerol (DAG) and inositol 1,4,5-trisphosphate (IP3) involved in G-protein coupled receptor signaling pathways. PLCB4 is a direct effector of the endothelin receptor signaling pathway that plays an essential role in lower jaw and middle ear structures development. In Rattus norvegicus (Rat), this protein is 1-phosphatidylinositol 4,5-bisphosphate phosphodiesterase beta-4.